We begin with the raw amino-acid sequence, 614 residues long: Putative binding protein BMEII0691 (614 aa).

The signal sequence occupies residues methionine 1 to alanine 28.

Belongs to the bacterial solute-binding protein 5 family.

The protein localises to the periplasm. The chain is Putative binding protein BMEII0691 from Brucella melitensis biotype 1 (strain ATCC 23456 / CCUG 17765 / NCTC 10094 / 16M).